The sequence spans 99 residues: HssA/B-like protein 42 (99 aa).

The disordered stretch occupies residues 1–29; sequence MTLFSSISSMSTSMSGSKSSISSFGSGTS.

This sequence belongs to the hssA/B family.

This chain is HssA/B-like protein 42 (hssl42), found in Dictyostelium discoideum (Social amoeba).